We begin with the raw amino-acid sequence, 349 residues long: Protein-glutamate methylesterase/protein-glutamine glutaminase (349 aa).

Residues 5-122 enclose the Response regulatory domain; that stretch reads RVLSVDDSAL…REGMLAYSEM (118 aa). Aspartate 56 carries the 4-aspartylphosphate modification. Residues 152–344 enclose the CheB-type methylesterase domain; sequence LLSSEKLIAI…QQMLAKISAG (193 aa). Catalysis depends on residues serine 164, histidine 190, and aspartate 286.

This sequence belongs to the CheB family. Phosphorylated by CheA. Phosphorylation of the N-terminal regulatory domain activates the methylesterase activity.

The protein resides in the cytoplasm. The enzyme catalyses [protein]-L-glutamate 5-O-methyl ester + H2O = L-glutamyl-[protein] + methanol + H(+). It catalyses the reaction L-glutaminyl-[protein] + H2O = L-glutamyl-[protein] + NH4(+). Involved in chemotaxis. Part of a chemotaxis signal transduction system that modulates chemotaxis in response to various stimuli. Catalyzes the demethylation of specific methylglutamate residues introduced into the chemoreceptors (methyl-accepting chemotaxis proteins or MCP) by CheR. Also mediates the irreversible deamidation of specific glutamine residues to glutamic acid. The chain is Protein-glutamate methylesterase/protein-glutamine glutaminase from Escherichia coli O157:H7.